A 103-amino-acid chain; its full sequence is Small ribosomal subunit protein uS10 (103 aa).

The protein belongs to the universal ribosomal protein uS10 family. In terms of assembly, part of the 30S ribosomal subunit.

Involved in the binding of tRNA to the ribosomes. This chain is Small ribosomal subunit protein uS10, found in Acidovorax sp. (strain JS42).